The chain runs to 287 residues: Elongation factor Ts (287 aa).

The interval T80–L83 is involved in Mg(2+) ion dislocation from EF-Tu.

It belongs to the EF-Ts family.

The protein resides in the cytoplasm. Associates with the EF-Tu.GDP complex and induces the exchange of GDP to GTP. It remains bound to the aminoacyl-tRNA.EF-Tu.GTP complex up to the GTP hydrolysis stage on the ribosome. This is Elongation factor Ts from Ectopseudomonas mendocina (strain ymp) (Pseudomonas mendocina).